A 554-amino-acid polypeptide reads, in one-letter code: Glucose-6-phosphate isomerase (554 aa).

S2 is modified (N-acetylserine). T53 carries the post-translational modification Phosphothreonine. Residues 168 to 169 (GS), 218 to 223 (SKTFTT), Q363, E367, H398, and K520 each bind D-glucose 6-phosphate. A Phosphothreonine modification is found at T220. The Proton donor role is filled by E367. Residues H398 and K520 contribute to the active site.

It belongs to the GPI family. Homodimer.

It localises to the cytoplasm. The protein localises to the cytosol. It catalyses the reaction alpha-D-glucose 6-phosphate = beta-D-fructose 6-phosphate. It functions in the pathway carbohydrate degradation; glycolysis; D-glyceraldehyde 3-phosphate and glycerone phosphate from D-glucose: step 2/4. With respect to regulation, strongly inhibited by the polyol (sugar alcohol) phosphate D-glucitol 6-phosphate (D-sorbitol 6-phosphate). Also inhibited by the polyol (sugar alcohol) phosphate D-ribitol 5-phosphate. In the cytoplasm, catalyzes the conversion of glucose-6-phosphate to fructose-6-phosphate, the second step in glycolysis, and the reverse reaction during gluconeogenesis. The protein is Glucose-6-phosphate isomerase (PGI1) of Saccharomyces cerevisiae (strain ATCC 204508 / S288c) (Baker's yeast).